The primary structure comprises 608 residues: MNFNFNKYPILSFANSVENLRLLSVEQLPQLCFELREYLLDVVSISKGHFASGLGVVEITVALHYVYNTPFDNLLWDTGHQAYPHKILTGRGEKINSIRKKNGLHSFPCREESEYDSLSVGHSSTSISAGLGMSIAAEKEGRNRKTICIIGDGAMTAGMAFEAINHAGEIQSNLLVILNDNQMSISRNVGALNKHLKILRSVQNTQKNRKKIRLLNKKLFFKDKRIQNHSISFNSIFSNLGCKYLGPFDGHNIFSIINTLKKIKNKKGTYLLHLVTKKGKGYLPAELNPIKWHTISSRDSSVSKSLSYSDVFGTWLCEIAAFDKKLIAITPAMCEGSGMVKFSRLFPNQYFDVAIAEQHAVTFAAGLAISGYKPVVSIYSTFFQRAYDQLIHDIALQKLSVLFAVDRAGIVGNDGQTHQGVFDLAYLRCIPGIVIMTPSNENECRQMLYTGYMHNKGPSVVRYPKGYGVGALLMPMNRIPIGKSLIKRRGKKIAILNFGILLHNAYCAAEKLDATLVDMRFVKPLDKSMILKLSSQNKFFITLEEGVISGGAGSAVNEFIMVNKIFLPVLNIGLPDTFIPQGTQEEIRHVYKLDSEGIYKQIFYWLRQ.

Thiamine diphosphate contacts are provided by residues His80 and 121-123 (GHS). Residue Asp152 participates in Mg(2+) binding. Residues 153-154 (GA), Asn181, Tyr282, and Glu357 contribute to the thiamine diphosphate site. Residue Asn181 coordinates Mg(2+).

The protein belongs to the transketolase family. DXPS subfamily. In terms of assembly, homodimer. Mg(2+) serves as cofactor. Thiamine diphosphate is required as a cofactor.

It catalyses the reaction D-glyceraldehyde 3-phosphate + pyruvate + H(+) = 1-deoxy-D-xylulose 5-phosphate + CO2. It participates in metabolic intermediate biosynthesis; 1-deoxy-D-xylulose 5-phosphate biosynthesis; 1-deoxy-D-xylulose 5-phosphate from D-glyceraldehyde 3-phosphate and pyruvate: step 1/1. Catalyzes the acyloin condensation reaction between C atoms 2 and 3 of pyruvate and glyceraldehyde 3-phosphate to yield 1-deoxy-D-xylulose-5-phosphate (DXP). The protein is 1-deoxy-D-xylulose-5-phosphate synthase of Buchnera aphidicola subsp. Acyrthosiphon pisum (strain 5A).